A 261-amino-acid polypeptide reads, in one-letter code: Type III pantothenate kinase (261 aa).

ATP is bound at residue 6-13 (DVGNTNAK). Substrate is bound at residue 108–111 (GADR). Asp-110 (proton acceptor) is an active-site residue. Position 134 (Thr-134) interacts with ATP. Substrate is bound at residue Thr-188.

This sequence belongs to the type III pantothenate kinase family. As to quaternary structure, homodimer. Requires NH4(+) as cofactor. It depends on K(+) as a cofactor.

The protein resides in the cytoplasm. The enzyme catalyses (R)-pantothenate + ATP = (R)-4'-phosphopantothenate + ADP + H(+). It participates in cofactor biosynthesis; coenzyme A biosynthesis; CoA from (R)-pantothenate: step 1/5. Catalyzes the phosphorylation of pantothenate (Pan), the first step in CoA biosynthesis. The polypeptide is Type III pantothenate kinase (Sphingopyxis alaskensis (strain DSM 13593 / LMG 18877 / RB2256) (Sphingomonas alaskensis)).